We begin with the raw amino-acid sequence, 581 residues long: MALKRLKTKKSKRLTGRLKHKIEKKVRDHNKKERRAAKKNPKKGSKKQKLIQIPNICPFKDDILKEVEEAKQRQEAERLARREAFKAEREQNKFKTLESMVEDADMRSTVHGIMHENDAQDQDEKKYKNAVTKEQSLKQYFKEFRKVIENADVVLEVVDARDPLGTRCNEVERAVRGAPGNKRLVLVLNKADLVPRENLNNWIKYFRRSGPVTAFKASTQDQANRLGRRKLREMKTEKAMQGSVCIGAELLMSMLGNYCRNKGIKTSIRVGVVGIPNVGKSSIINSLTRGRSCMVGSTPGVTKSMQEVELDSKIKLIDCPGIVFTSGGENSHAVLKNAQRVGDVKDPFTIAESVLKRASKEYFCTMYDITNYDTFEEFFAKKAARMGKFLKKGVPDVVAAARSVLNDWNTGKIKYCTQPPEVQEGQSVHISASIVHSEAREFDVENFESMETEILEHCAVKTDDIMEITSTGPLEIRQPREEAEPADKITASLVIDEKEKPAKGRKRKLDEEKEKVDPSLLLEENQSLNKGIKQMQKLKKKQNVRNEKKISKITDVLDSFSLGPSSSKAEKYDFDEDYVIE.

Residues 1 to 49 (MALKRLKTKKSKRLTGRLKHKIEKKVRDHNKKERRAAKKNPKKGSKKQK) show a composition bias toward basic residues. The interval 1–50 (MALKRLKTKKSKRLTGRLKHKIEKKVRDHNKKERRAAKKNPKKGSKKQKL) is disordered. Residues 64-108 (LKEVEEAKQRQEAERLARREAFKAEREQNKFKTLESMVEDADMRS) are a coiled coil. The residue at position 99 (serine 99) is a Phosphoserine. The region spanning 141 to 325 (FKEFRKVIEN…LIDCPGIVFT (185 aa)) is the CP-type G domain. GTP is bound by residues 189–192 (NKAD), 274–281 (GIPNVGKS), and 318–321 (DCPG). Residues 500–517 (KPAKGRKRKLDEEKEKVD) are compositionally biased toward basic and acidic residues. Residues 500-519 (KPAKGRKRKLDEEKEKVDPS) form a disordered region.

Belongs to the TRAFAC class YlqF/YawG GTPase family.

It localises to the nucleus. The protein localises to the nucleolus. Its function is as follows. May play a role in regulating cellular proliferation. The chain is Guanine nucleotide-binding protein-like 3 homolog (Ns1) from Drosophila melanogaster (Fruit fly).